The following is a 493-amino-acid chain: Protein nucleotidyltransferase YdiU (493 aa).

Residues Gly-81, Gly-83, Arg-84, Lys-103, Asp-115, Gly-116, Arg-166, and Arg-173 each contribute to the ATP site. Residue Asp-244 is the Proton acceptor of the active site. The Mg(2+) site is built by Asn-245 and Asp-254. Asp-254 serves as a coordination point for ATP.

Belongs to the SELO family. Requires Mg(2+) as cofactor. Mn(2+) is required as a cofactor.

The enzyme catalyses L-seryl-[protein] + ATP = 3-O-(5'-adenylyl)-L-seryl-[protein] + diphosphate. It carries out the reaction L-threonyl-[protein] + ATP = 3-O-(5'-adenylyl)-L-threonyl-[protein] + diphosphate. It catalyses the reaction L-tyrosyl-[protein] + ATP = O-(5'-adenylyl)-L-tyrosyl-[protein] + diphosphate. The catalysed reaction is L-histidyl-[protein] + UTP = N(tele)-(5'-uridylyl)-L-histidyl-[protein] + diphosphate. The enzyme catalyses L-seryl-[protein] + UTP = O-(5'-uridylyl)-L-seryl-[protein] + diphosphate. It carries out the reaction L-tyrosyl-[protein] + UTP = O-(5'-uridylyl)-L-tyrosyl-[protein] + diphosphate. Functionally, nucleotidyltransferase involved in the post-translational modification of proteins. It can catalyze the addition of adenosine monophosphate (AMP) or uridine monophosphate (UMP) to a protein, resulting in modifications known as AMPylation and UMPylation. The protein is Protein nucleotidyltransferase YdiU of Shewanella frigidimarina (strain NCIMB 400).